The following is a 277-amino-acid chain: F420-dependent methylenetetrahydromethanopterin dehydrogenase (277 aa).

It belongs to the MTD family.

The enzyme catalyses 5,10-methylenetetrahydromethanopterin + oxidized coenzyme F420-(gamma-L-Glu)(n) + 2 H(+) = 5,10-methenyl-5,6,7,8-tetrahydromethanopterin + reduced coenzyme F420-(gamma-L-Glu)(n). Its pathway is one-carbon metabolism; methanogenesis from CO(2); 5,10-methylene-5,6,7,8-tetrahydromethanopterin from 5,10-methenyl-5,6,7,8-tetrahydromethanopterin (coenzyme F420 route): step 1/1. Its function is as follows. Catalyzes the reversible reduction of methenyl-H(4)MPT(+) to methylene-H(4)MPT. This is F420-dependent methylenetetrahydromethanopterin dehydrogenase from Methanococcus maripaludis (strain C5 / ATCC BAA-1333).